The primary structure comprises 463 residues: MSIFFSPSSPTLFFSTTNANPRVSPSSSPSSAFTPPLSSSRLRPILRGFPCLAFSAPANAAHGTAETVHGNKWPSPSSSSSAATQPSAGSDHGHSRTFIDARSEQDLLSGIQRELEAGTLPKHIAQAMEELYQNYKNAVLQSAAPHAEDIVLSNMRVAFDRMFLDVKEPFEFSPYHEAILEPFNYYMFGQNYIRPLVNFRESYVGNVSVFGVMEEQLKQGDKVVLISNHQTEADPAVIALMLETTNPHISENIIYVAGDRVITDPLCKPFSMGRNLLCVYSKKHMNDVPELAEMKKRSNTRSLKGRMALLLRGGSKIIWIAPSGGRDRPDPITNQWFPAPFDATSLDNMRRLVDHAGLVGHIYPLAILCHDIMPPPLQVEKEIGEKSWISFHGTGISVAPEINFQEVTASCGSPEEAKAAYSQALYDSVCEQYKVLHSAVHGGKGLEASTPSVSLSQPLQFLD.

Residues 1–91 (MSIFFSPSSP…AATQPSAGSD (91 aa)) constitute a chloroplast transit peptide. Disordered regions lie at residues 18–37 (NANP…TPPL) and 65–95 (AETV…HGHS). Low complexity-rich tracts occupy residues 24–37 (SPSS…TPPL) and 74–90 (PSPS…SAGS). An HXXXXD motif motif is present at residues 229-234 (HQTEAD).

Belongs to the GPAT/DAPAT family.

Its subcellular location is the plastid. The protein resides in the chloroplast stroma. The catalysed reaction is sn-glycerol 3-phosphate + an acyl-CoA = a 1-acyl-sn-glycero-3-phosphate + CoA. It functions in the pathway phospholipid metabolism; CDP-diacylglycerol biosynthesis; CDP-diacylglycerol from sn-glycerol 3-phosphate: step 1/3. Its function is as follows. Esterifies acyl-group from acyl-ACP to the sn-1 position of glycerol-3-phosphate. The enzyme from chilling-resistant plants discriminates against non-fluid palmitic acid and selects oleic acid whereas the enzyme from sensitive plants accepts both fatty acids. In Carthamus tinctorius (Safflower), this protein is Glycerol-3-phosphate acyltransferase, chloroplastic.